A 341-amino-acid polypeptide reads, in one-letter code: Abnormal cell lineage protein 44 (341 aa).

The N-terminal stretch at 1-21 (MRALYFRTTTLSTFFILCSLA) is a signal peptide. 11 disulfides stabilise this stretch: C84-C95, C134-C142, C144-C158, C206-C220, C208-C215, C265-C292, C275-C287, C291-C331, C307-C322, C309-C319, and C314-C315. Residue S212 is the site of O-palmitoleoyl serine; by mom-1 attachment. N-linked (GlcNAc...) asparagine glycosylation is present at N279.

This sequence belongs to the Wnt family. Post-translationally, palmitoleoylation is required for efficient binding to frizzled receptors. Depalmitoleoylation leads to Wnt signaling pathway inhibition.

It localises to the secreted. The protein localises to the extracellular space. The protein resides in the extracellular matrix. In terms of biological role, ligand for members of the frizzled family of seven transmembrane receptors. Affects male tail development, vulval precursor cell specification and egg laying. Involved in morphogenesis by influencing polarity of asymmetric cell divisions of the B, U, and F cells in the male, and the T cell in males and hermaphrodites. Controls spindle orientation in B-gamma cell division during male copulatory spicule development. Involved in specification of the P7.p lineage during vulval development. Has a role in providing polarity and default lin-17 localization in axon development and positioning of neuromuscular synapses in DA9 regions by negatively regulating synaptogenesis. The chain is Abnormal cell lineage protein 44 from Caenorhabditis briggsae.